Reading from the N-terminus, the 379-residue chain is MAKQDYYESLGVAKSADDREIKKAYKRLAMKYHPDRNPGDSEAEAKFKEIKEAYEILIDSQKRAAYDQYGHAAFEQGGMGGGGGGGFGGGGADFGDIFGDVFGDIFGGGRRQRASRGSDLRYNMELSLEEAVRGVTKEIRIPALEECDVCHGNGAKPGSSPITCPTCHGNGQVQMRQGFFTVQQACPHCHGRGKIIKDPCIKCHGHGRVEKSKTLSVKIPAGVDTGDRIRLSGEGEAGDHGAPSGDLYVQVQVKAHPIFQREENNLYCEVPINFAMAALGGEIEVPTLDGRVKLKVPAETQTGKLFRMRGKGVKSVRGGAQGDLLCRVVVETPVNLNERQRQLLQELDESFGGPSGERNSPRSKNFFDGVKKFFDDLTR.

The J domain occupies 5 to 70 (DYYESLGVAK…QKRAAYDQYG (66 aa)). The CR-type zinc-finger motif lies at 134–212 (GVTKEIRIPA…CHGHGRVEKS (79 aa)). Zn(2+) contacts are provided by Cys147, Cys150, Cys164, Cys167, Cys186, Cys189, Cys200, and Cys203. CXXCXGXG motif repeat units follow at residues 147 to 154 (CDVCHGNG), 164 to 171 (CPTCHGNG), 186 to 193 (CPHCHGRG), and 200 to 207 (CIKCHGHG).

This sequence belongs to the DnaJ family. Homodimer. The cofactor is Zn(2+).

It localises to the cytoplasm. Functionally, participates actively in the response to hyperosmotic and heat shock by preventing the aggregation of stress-denatured proteins and by disaggregating proteins, also in an autonomous, DnaK-independent fashion. Unfolded proteins bind initially to DnaJ; upon interaction with the DnaJ-bound protein, DnaK hydrolyzes its bound ATP, resulting in the formation of a stable complex. GrpE releases ADP from DnaK; ATP binding to DnaK triggers the release of the substrate protein, thus completing the reaction cycle. Several rounds of ATP-dependent interactions between DnaJ, DnaK and GrpE are required for fully efficient folding. Also involved, together with DnaK and GrpE, in the DNA replication of plasmids through activation of initiation proteins. In Pectobacterium atrosepticum (strain SCRI 1043 / ATCC BAA-672) (Erwinia carotovora subsp. atroseptica), this protein is Chaperone protein DnaJ.